A 343-amino-acid chain; its full sequence is Tetraacyldisaccharide 4'-kinase (343 aa).

Residue 58-65 (VAGGAGKT) participates in ATP binding.

It belongs to the LpxK family.

It catalyses the reaction a lipid A disaccharide + ATP = a lipid IVA + ADP + H(+). It functions in the pathway glycolipid biosynthesis; lipid IV(A) biosynthesis; lipid IV(A) from (3R)-3-hydroxytetradecanoyl-[acyl-carrier-protein] and UDP-N-acetyl-alpha-D-glucosamine: step 6/6. Transfers the gamma-phosphate of ATP to the 4'-position of a tetraacyldisaccharide 1-phosphate intermediate (termed DS-1-P) to form tetraacyldisaccharide 1,4'-bis-phosphate (lipid IVA). The polypeptide is Tetraacyldisaccharide 4'-kinase (Polaromonas naphthalenivorans (strain CJ2)).